The chain runs to 227 residues: MGGKQSTAARSRGPFPGVSTDDSAVPPPGGAPHFGHYRTGGGAMGLRSRSVSSVAGMGMDPSTAGGVPFSLYTPASRGTGDSERAPGGGGSTSDSTYAHGNGYQETGGGHHRDGMLYLGSRASLADALPLHIAPRWFSSHSGFKCPICSKSVASDEMEMHFIMCLSKPRLSYNDDVLTKDAGECVICLEELLQGDTIARLPCLCIYHKSCIDSWFEVNRSCPEHPAD.

The tract at residues 1–42 is disordered; sequence MGGKQSTAARSRGPFPGVSTDDSAVPPPGGAPHFGHYRTGGG. G2 carries N-myristoyl glycine lipidation. A required for endosomal and lysosomal localization and myristoylation region spans residues 2-10; the sequence is GGKQSTAAR. 3 positions are modified to phosphoserine: S50, S52, and S53. The disordered stretch occupies residues 65–105; the sequence is GGVPFSLYTPASRGTGDSERAPGGGGSTSDSTYAHGNGYQE. Y103 carries the post-translational modification Phosphotyrosine. S123 is modified (phosphoserine). The RING-type; atypical zinc-finger motif lies at 184 to 225; sequence CVICLEELLQGDTIARLPCLCIYHKSCIDSWFEVNRSCPEHP.

In terms of assembly, interacts with AKT1, GLUL and TUBB2A. Interacts with ZNRF2. Interacts (via its RING domain) with UBE2N. Interacts (when phosphorylated) with YWHAE. N-myristoylation targets ZNRF1 to intracellular membranes. Post-translationally, phosphorylated by SRC at Tyr-103; leading to 'Lys-63'-linked ubiquitination of TLR3, lysosomal trafficking and degradation.

Its subcellular location is the endosome. It is found in the lysosome. It localises to the membrane. The protein localises to the cytoplasmic vesicle. The protein resides in the secretory vesicle. Its subcellular location is the synaptic vesicle membrane. It carries out the reaction S-ubiquitinyl-[E2 ubiquitin-conjugating enzyme]-L-cysteine + [acceptor protein]-L-lysine = [E2 ubiquitin-conjugating enzyme]-L-cysteine + N(6)-ubiquitinyl-[acceptor protein]-L-lysine.. The protein operates within protein modification; protein ubiquitination. E3 ubiquitin-protein ligase that plays a role in different processes including cell differentiation, receptor recycling or regulation of inflammation. Mediates the ubiquitination of AKT1 and GLUL, thereby playing a role in neuron cells differentiation. Plays a role in the establishment and maintenance of neuronal transmission and plasticity. Regulates Schwann cells differentiation by mediating ubiquitination of GLUL. Promotes neurodegeneration by mediating 'Lys-48'-linked polyubiquitination and subsequent degradation of AKT1 in axons: degradation of AKT1 prevents AKT1-mediated phosphorylation of GSK3B, leading to GSK3B activation and phosphorylation of DPYSL2/CRMP2 followed by destabilization of microtubule assembly in axons. Ubiquitinates the Na(+)/K(+) ATPase alpha-1 subunit/ATP1A1 and thereby influences its endocytosis and/or degradation. Controls ligand-induced EGFR signaling via mediating receptor ubiquitination and recruitment of the ESCRT machinery. Acts as a negative feedback mechanism controlling TLR3 trafficking by mediating TLR3 'Lys-63'-linked polyubiquitination to reduce type I IFN production. Modulates inflammation by promoting caveolin-1/CAV1 ubiquitination and degradation to regulate TLR4-activated immune response. The chain is E3 ubiquitin-protein ligase ZNRF1 (Znrf1) from Mus musculus (Mouse).